The primary structure comprises 620 residues: Membrane protein insertase YidC (620 aa).

A helical transmembrane segment spans residues 7–27 (NYLIAIALSVMVVLGWQFFYM). Residues 37-58 (AEQAQQAQQAKTPATQATPGAA) show a composition bias toward low complexity. Residues 37-77 (AEQAQQAQQAKTPATQATPGAAVNGALPGQTQASATTSRED) form a disordered region. A run of 4 helical transmembrane segments spans residues 399-419 (FGVA…PLAS), 469-489 (WPLL…YITI), 514-534 (LFGL…WPII), and 560-580 (WMPL…VIYW).

The protein belongs to the OXA1/ALB3/YidC family. Type 1 subfamily. Interacts with the Sec translocase complex via SecD. Specifically interacts with transmembrane segments of nascent integral membrane proteins during membrane integration.

It localises to the cell inner membrane. Required for the insertion and/or proper folding and/or complex formation of integral membrane proteins into the membrane. Involved in integration of membrane proteins that insert both dependently and independently of the Sec translocase complex, as well as at least some lipoproteins. Aids folding of multispanning membrane proteins. This Allorhizobium ampelinum (strain ATCC BAA-846 / DSM 112012 / S4) (Agrobacterium vitis (strain S4)) protein is Membrane protein insertase YidC.